A 360-amino-acid polypeptide reads, in one-letter code: Photosystem II protein D1 3 (360 aa).

3 helical membrane passes run 29-46 (YVGWFGVLMIPTLLAATI), 118-133 (HFLIGVFCYMGREWEL), and 142-156 (WICVAYSAPVAAATA). Residue His118 participates in chlorophyll a binding. Pheophytin a is bound at residue Tyr126. Residues Asp170 and Glu189 each contribute to the [CaMn4O5] cluster site. The helical transmembrane segment at 197–218 (FHQLGVAGVFGGALFSAMHGSL) threads the bilayer. His198 contacts chlorophyll a. A quinone contacts are provided by residues His215 and 264-265 (SF). Residue His215 coordinates Fe cation. Fe cation is bound at residue His272. The chain crosses the membrane as a helical span at residues 274–288 (FLAAWPVIGIWFTAL). [CaMn4O5] cluster contacts are provided by His332, Glu333, Asp342, and Ala344. Residues 345–360 (SAESAPVAMIAPSING) constitute a propeptide that is removed on maturation.

This sequence belongs to the reaction center PufL/M/PsbA/D family. In terms of assembly, PSII is composed of 1 copy each of membrane proteins PsbA, PsbB, PsbC, PsbD, PsbE, PsbF, PsbH, PsbI, PsbJ, PsbK, PsbL, PsbM, PsbT, PsbX, PsbY, PsbZ, Psb30/Ycf12, peripheral proteins PsbO, CyanoQ (PsbQ), PsbU, PsbV and a large number of cofactors. It forms dimeric complexes. Precursor protein interacts with Ycf48. The D1/D2 heterodimer binds P680, chlorophylls that are the primary electron donor of PSII, and subsequent electron acceptors. It shares a non-heme iron and each subunit binds pheophytin, quinone, additional chlorophylls, carotenoids and lipids. D1 provides most of the ligands for the Mn4-Ca-O5 cluster of the oxygen-evolving complex (OEC). There is also a Cl(-1) ion associated with D1 and D2, which is required for oxygen evolution. The PSII complex binds additional chlorophylls, carotenoids and specific lipids. serves as cofactor. Post-translationally, C-terminally processed by CtpA; processing is essential to allow assembly of the oxygen-evolving complex and thus photosynthetic growth. In terms of processing, tyr-161 forms a radical intermediate that is referred to as redox-active TyrZ, YZ or Y-Z.

The protein localises to the cellular thylakoid membrane. It catalyses the reaction 2 a plastoquinone + 4 hnu + 2 H2O = 2 a plastoquinol + O2. In terms of biological role, photosystem II (PSII) is a light-driven water:plastoquinone oxidoreductase that uses light energy to abstract electrons from H(2)O, generating O(2) and a proton gradient subsequently used for ATP formation. It consists of a core antenna complex that captures photons, and an electron transfer chain that converts photonic excitation into a charge separation. The D1/D2 (PsbA/PsbD) reaction center heterodimer binds P680, the primary electron donor of PSII as well as several subsequent electron acceptors. This is Photosystem II protein D1 3 from Thermosynechococcus vestitus (strain NIES-2133 / IAM M-273 / BP-1).